The chain runs to 700 residues: ATP-dependent DNA helicase UvrD2 (700 aa).

The UvrD-like helicase ATP-binding domain maps to 10–301; the sequence is AGLDDQQREA…VRLERDYRST (292 aa). ATP contacts are provided by residues 34–39 and R299; that span reads GTGKTR. Residues 302–553 form the UvrD-like helicase C-terminal domain; it reads PQVVSLANRV…LYVGITRARV (252 aa). Residues 565-595 form a disordered region; it reads PGGRQSRKPSRFLNGIAPQTRADPVPGTSRR. One can recognise an HRDC domain in the interval 626 to 700; that stretch reads ADVDEELLLQ…DVLQLVRGRT (75 aa).

Belongs to the helicase family. UvrD subfamily. The cofactor is Mg(2+).

The catalysed reaction is Couples ATP hydrolysis with the unwinding of duplex DNA by translocating in the 3'-5' direction.. It carries out the reaction ATP + H2O = ADP + phosphate + H(+). In terms of biological role, DNA-dependent ATPase, stimulated equally by ss- and dsDNA. Has both ATPase and helicase activities. This chain is ATP-dependent DNA helicase UvrD2 (uvrD2), found in Mycobacterium bovis (strain ATCC BAA-935 / AF2122/97).